Reading from the N-terminus, the 355-residue chain is Gentisate 1,2-dioxygenase (355 aa).

Positions 106 to 174 (MQLLLPGEWA…GNEPVVWLDV (69 aa)) constitute a Cupin type-2 domain.

Belongs to the gentisate 1,2-dioxygenase family.

It carries out the reaction 2,5-dihydroxybenzoate + O2 = 3-maleylpyruvate + H(+). It functions in the pathway aromatic compound metabolism; naphthalene degradation. Its function is as follows. Catalyzes the oxygen-dependent ring fission of gentisate between the carboxyl and proximal hydroxyl groups at positions 1 and 2 of the aromatic ring to form maleylpyruvate. Can also catalyze oxidation of alkyl- and halogenated gentisates. Exhibits higher affinity for 3-substituted gentisates than for gentisate but has higher activity with gentisate. This chain is Gentisate 1,2-dioxygenase, found in Ralstonia sp.